Consider the following 114-residue polypeptide: Large ribosomal subunit protein uL22 (114 aa).

It belongs to the universal ribosomal protein uL22 family. As to quaternary structure, part of the 50S ribosomal subunit.

Its function is as follows. This protein binds specifically to 23S rRNA; its binding is stimulated by other ribosomal proteins, e.g. L4, L17, and L20. It is important during the early stages of 50S assembly. It makes multiple contacts with different domains of the 23S rRNA in the assembled 50S subunit and ribosome. The globular domain of the protein is located near the polypeptide exit tunnel on the outside of the subunit, while an extended beta-hairpin is found that lines the wall of the exit tunnel in the center of the 70S ribosome. The polypeptide is Large ribosomal subunit protein uL22 (Aeromonas salmonicida (strain A449)).